The sequence spans 338 residues: Putative pectinesterase 63 (338 aa).

A signal peptide spans 1 to 24 (MGYNYVSLIVTILLVVITSPVVFG). Substrate is bound by residues Thr-116 and Gln-151. Asp-174 functions as the Proton donor in the catalytic mechanism. Asp-195 (nucleophile) is an active-site residue. Position 252 (Arg-252) interacts with substrate.

The protein belongs to the pectinesterase family.

The protein resides in the secreted. It is found in the cell wall. It carries out the reaction [(1-&gt;4)-alpha-D-galacturonosyl methyl ester](n) + n H2O = [(1-&gt;4)-alpha-D-galacturonosyl](n) + n methanol + n H(+). It functions in the pathway glycan metabolism; pectin degradation; 2-dehydro-3-deoxy-D-gluconate from pectin: step 1/5. Its function is as follows. Acts in the modification of cell walls via demethylesterification of cell wall pectin. The sequence is that of Putative pectinesterase 63 (PME63) from Arabidopsis thaliana (Mouse-ear cress).